A 153-amino-acid chain; its full sequence is Vasotocin-neurophysin VT 1 (153 aa).

The N-terminal stretch at 1-19 (MPQCALLLSLLGLLALSSA) is a signal peptide. Cys20 and Cys25 are oxidised to a cystine. Gly28 carries the post-translational modification Glycine amide. 7 disulfides stabilise this stretch: Cys41-Cys85, Cys44-Cys58, Cys52-Cys75, Cys59-Cys65, Cys92-Cys105, Cys99-Cys117, and Cys106-Cys111.

Belongs to the vasopressin/oxytocin family. Post-translationally, seven disulfide bonds are present in neurophysin.

The protein localises to the secreted. In terms of biological role, vasotocin is probably an antidiuretic hormone. The polypeptide is Vasotocin-neurophysin VT 1 (Takifugu rubripes (Japanese pufferfish)).